A 485-amino-acid polypeptide reads, in one-letter code: Mitochondria-eating protein (485 aa).

Positions 112–210 (TSHERELNEV…SILSSESSIL (99 aa)) form a coiled coil. 2 stretches are compositionally biased toward low complexity: residues 214–241 (LSRS…SPTS) and 471–485 (RSRS…TPRF). Disordered stretches follow at residues 214–244 (LSRS…SAKL) and 451–485 (RSRS…TPRF).

It belongs to the MIEAP family.

The protein localises to the cytoplasm. It localises to the mitochondrion outer membrane. It is found in the mitochondrion matrix. Its function is as follows. Key regulator of mitochondrial quality that mediates the repairing or degradation of unhealthy mitochondria in response to mitochondrial damage. Mediator of mitochondrial protein catabolic process (also named MALM) by mediating the degradation of damaged proteins inside mitochondria by promoting the accumulation in the mitochondrial matrix of hydrolases that are characteristic of the lysosomal lumen. Also involved in mitochondrion degradation of damaged mitochondria by promoting the formation of vacuole-like structures (named MIV), which engulf and degrade unhealthy mitochondria by accumulating lysosomes. Binds cardiolipin. May form molecular condensates (non-membrane-bounded organelles) within mitochondria that compartmentalize and promote cardiolipin metabolism. This chain is Mitochondria-eating protein (spata18), found in Xenopus laevis (African clawed frog).